A 294-amino-acid polypeptide reads, in one-letter code: NAD kinase (294 aa).

Aspartate 74 serves as the catalytic Proton acceptor. NAD(+)-binding positions include 74–75, 148–149, arginine 159, arginine 176, aspartate 178, 189–194, and glutamine 247; these read DG, ND, and TAYALS.

The protein belongs to the NAD kinase family. It depends on a divalent metal cation as a cofactor.

It is found in the cytoplasm. It catalyses the reaction NAD(+) + ATP = ADP + NADP(+) + H(+). Functionally, involved in the regulation of the intracellular balance of NAD and NADP, and is a key enzyme in the biosynthesis of NADP. Catalyzes specifically the phosphorylation on 2'-hydroxyl of the adenosine moiety of NAD to yield NADP. This chain is NAD kinase, found in Azoarcus sp. (strain BH72).